Here is a 513-residue protein sequence, read N- to C-terminus: Zinc finger CCCH-type with G patch domain-containing protein (513 aa).

Position 1 is an N-acetylmethionine (M1). The tract at residues 92–131 (PVAPGAELETVPSRETGPGPTEPGQEEDDGEDEEGGAALS) is disordered. A compositionally biased stretch (acidic residues) spans 115–126 (GQEEDDGEDEEG). The C3H1-type zinc finger occupies 176–202 (KSLKPCPFFLEGKCRFQENCRFSHGQV). Residues 267–298 (LPPLRTDPAGSSDSDGSDADDPSYARVVEPGA) are disordered. S278 and S355 each carry phosphoserine. Positions 315–361 (TRGIGSRLLAKMGYEFGKGLGRRADGRVEPVHAVVLPRGKSLDQCAE) constitute a G-patch domain. 2 disordered regions span residues 367 to 394 (TRAGQAGVSKPPKCRSRGSGPGGRPPPR) and 493 to 513 (QEAGLQREQRKADTHKKMTEF). Over residues 497 to 513 (LQREQRKADTHKKMTEF) the composition is skewed to basic and acidic residues.

Interacts with CHD4/Mi-2; the interaction is direct.

Its subcellular location is the nucleus. Transcription repressor that specifically binds the 5'-GGAG[GA]A[GA]A-3' consensus sequence. Represses transcription by recruiting the chromatin multiprotein complex NuRD to target promoters. Negatively regulates expression of EGFR, a gene involved in cell proliferation, survival and migration. Its ability to repress genes of the EGFR pathway suggest it may act as a tumor suppressor. This Ovis aries (Sheep) protein is Zinc finger CCCH-type with G patch domain-containing protein (ZGPAT).